A 420-amino-acid chain; its full sequence is Mitochondrial chaperone BCS1 (420 aa).

Over 1–15 (MTLSDFIGALKDNPY) the chain is Mitochondrial intermembrane. A helical membrane pass occupies residues 16-32 (FGAGFGLVGVGTALAVA). The Mitochondrial matrix segment spans residues 33–420 (RKGAQVGMIF…AIKNIAEIKD (388 aa)). 230-237 (GPPGCGKS) serves as a coordination point for ATP.

The protein belongs to the AAA ATPase family. BCS1 subfamily.

Its subcellular location is the mitochondrion inner membrane. It carries out the reaction ATP + H2O = ADP + phosphate + H(+). In terms of biological role, chaperone necessary for the incorporation of Rieske iron-sulfur protein uqcrfs1 into the mitochondrial respiratory chain complex III. This chain is Mitochondrial chaperone BCS1 (bcs1l), found in Danio rerio (Zebrafish).